The sequence spans 318 residues: Aspartate carbamoyltransferase catalytic subunit (318 aa).

Residues R67 and T68 each coordinate carbamoyl phosphate. L-aspartate is bound at residue K95. The carbamoyl phosphate site is built by R117, H145, and Q148. 2 residues coordinate L-aspartate: R178 and R236. Carbamoyl phosphate contacts are provided by G277 and P278.

The protein belongs to the aspartate/ornithine carbamoyltransferase superfamily. ATCase family. Heterododecamer (2C3:3R2) of six catalytic PyrB chains organized as two trimers (C3), and six regulatory PyrI chains organized as three dimers (R2).

The catalysed reaction is carbamoyl phosphate + L-aspartate = N-carbamoyl-L-aspartate + phosphate + H(+). It functions in the pathway pyrimidine metabolism; UMP biosynthesis via de novo pathway; (S)-dihydroorotate from bicarbonate: step 2/3. Its function is as follows. Catalyzes the condensation of carbamoyl phosphate and aspartate to form carbamoyl aspartate and inorganic phosphate, the committed step in the de novo pyrimidine nucleotide biosynthesis pathway. In Roseiflexus sp. (strain RS-1), this protein is Aspartate carbamoyltransferase catalytic subunit.